Consider the following 234-residue polypeptide: Ribose-5-phosphate isomerase A (234 aa).

Substrate contacts are provided by residues 28 to 31 (TGST), 85 to 88 (DGAD), and 98 to 101 (KGLG). The active-site Proton acceptor is the E107. Substrate is bound at residue K125.

It belongs to the ribose 5-phosphate isomerase family. As to quaternary structure, homodimer.

The enzyme catalyses aldehydo-D-ribose 5-phosphate = D-ribulose 5-phosphate. The protein operates within carbohydrate degradation; pentose phosphate pathway; D-ribose 5-phosphate from D-ribulose 5-phosphate (non-oxidative stage): step 1/1. Functionally, catalyzes the reversible conversion of ribose-5-phosphate to ribulose 5-phosphate. The sequence is that of Ribose-5-phosphate isomerase A from Roseiflexus castenholzii (strain DSM 13941 / HLO8).